A 542-amino-acid polypeptide reads, in one-letter code: 2,3-bisphosphoglycerate-independent phosphoglycerate mutase (542 aa).

Mn(2+)-binding residues include Asp-13 and Ser-63. Ser-63 acts as the Phosphoserine intermediate in catalysis. Residues His-124, 154 to 155 (RD), Arg-186, Arg-192, 263 to 266 (RADR), and Lys-357 each bind substrate. 5 residues coordinate Mn(2+): Asp-424, His-428, Asp-465, His-466, and His-484.

Belongs to the BPG-independent phosphoglycerate mutase family. In terms of assembly, monomer. The cofactor is Mn(2+).

It catalyses the reaction (2R)-2-phosphoglycerate = (2R)-3-phosphoglycerate. The protein operates within carbohydrate degradation; glycolysis; pyruvate from D-glyceraldehyde 3-phosphate: step 3/5. In terms of biological role, catalyzes the interconversion of 2-phosphoglycerate and 3-phosphoglycerate. The chain is 2,3-bisphosphoglycerate-independent phosphoglycerate mutase from Herpetosiphon aurantiacus (strain ATCC 23779 / DSM 785 / 114-95).